Consider the following 366-residue polypeptide: 3-isopropylmalate dehydrogenase (366 aa).

76–89 serves as a coordination point for NAD(+); the sequence is GPKWDANPSHLRPE. Positions 96, 106, 134, and 219 each coordinate substrate. The Mg(2+) site is built by Asp219, Asp243, and Asp247. An NAD(+)-binding site is contributed by 277 to 289; sequence GSAPDIAGKGIAN.

It belongs to the isocitrate and isopropylmalate dehydrogenases family. LeuB type 1 subfamily. As to quaternary structure, homodimer. Mg(2+) serves as cofactor. The cofactor is Mn(2+).

The protein localises to the cytoplasm. The catalysed reaction is (2R,3S)-3-isopropylmalate + NAD(+) = 4-methyl-2-oxopentanoate + CO2 + NADH. It participates in amino-acid biosynthesis; L-leucine biosynthesis; L-leucine from 3-methyl-2-oxobutanoate: step 3/4. Catalyzes the oxidation of 3-carboxy-2-hydroxy-4-methylpentanoate (3-isopropylmalate) to 3-carboxy-4-methyl-2-oxopentanoate. The product decarboxylates to 4-methyl-2 oxopentanoate. The polypeptide is 3-isopropylmalate dehydrogenase (Oceanobacillus iheyensis (strain DSM 14371 / CIP 107618 / JCM 11309 / KCTC 3954 / HTE831)).